We begin with the raw amino-acid sequence, 201 residues long: 3-isopropylmalate dehydratase small subunit (201 aa).

Belongs to the LeuD family. LeuD type 1 subfamily. In terms of assembly, heterodimer of LeuC and LeuD.

It carries out the reaction (2R,3S)-3-isopropylmalate = (2S)-2-isopropylmalate. The protein operates within amino-acid biosynthesis; L-leucine biosynthesis; L-leucine from 3-methyl-2-oxobutanoate: step 2/4. Catalyzes the isomerization between 2-isopropylmalate and 3-isopropylmalate, via the formation of 2-isopropylmaleate. The polypeptide is 3-isopropylmalate dehydratase small subunit (Rhizobium meliloti (strain 1021) (Ensifer meliloti)).